A 303-amino-acid chain; its full sequence is Target of rapamycin complex subunit LST8 (303 aa).

WD repeat units follow at residues 1–27 (MSVI…CSRT), 30–68 (HSDS…PNPV), 73–112 (GHRG…IPRN), 114–153 (KHNA…CTHQ), 157–196 (EDDT…DASH), 205–244 (AHST…KLET), and 248–287 (GHQR…IVRQ).

The protein belongs to the WD repeat LST8 family. As to quaternary structure, the target of rapamycin complex 1 (TORC1) is composed of at least KOG1, LST8, TCO89 and either TOR1 (TORC1-A) or TOR2 (TORC1-B). TORC1 binds to and is inhibited by FKBP-rapamycin. Interacts with PIB2; following activation of PIB2 by glutamine or cysteine and as part of the TORC1 complex. The target of rapamycin complex 2 (TORC2) is composed of at least AVO1, AVO2, BIT61, LST8, TOR2 and TSC11. TORC2 forms a homodimer. Contrary to TORC1, TORC2 does not bind to and is not sensitive to FKBP-rapamycin. LST8 binds to the C-terminal kinase domain in TOR2.

Its subcellular location is the cell membrane. The protein resides in the vacuole membrane. In terms of biological role, essential component of both TORC1 and TORC2. TORC1 regulates multiple cellular processes to control cell growth in response to environmental signals. Nutrient limitation and environmental stress signals cause inactivation of TORC1. Active TORC1 positively controls ribosome biogenesis via control of rRNA, ribosomal protein and tRNA gene expression, and rRNA processing. TORC1 positively controls protein biosynthesis by regulation of mRNA stability, translation initiation factor activity, and high-affinity amino acid permeases that serve to provide amino acids for use by the translation machinery. TORC1 also promotes growth by sequestering a number of nutrient and general stress-responsive transcription factors in the cytoplasm. TORC1 negatively controls macroautophagy, a process to recycle surplus cytoplasmic mass under nutrient starvation conditions. LST8 is involved in the negative regulation of transcription factors GLN3 and RTG1-RTG3, limiting the synthesis of alpha-ketoglutarate, glutamate and glutamine. LST8 is required for targeting of amino acid permeases (AAPs) to the plasma membrane. TORC2 regulates cell cycle-dependent polarization of the actin-cytoskeleton, cell wall integrity, and receptor endocytosis. TORC2 controls polarity of the actin cytoskeleton, which is required for orienting the secretory pathway toward discrete growth sites, via the RHO1/PKC1/MAPK cell integrity pathway. LST8 is involved in maintenance of cell wall integrity. LST8 modulates TOR2 kinase activity. This Saccharomyces cerevisiae (strain ATCC 204508 / S288c) (Baker's yeast) protein is Target of rapamycin complex subunit LST8.